Reading from the N-terminus, the 312-residue chain is Taste receptor type 2 member 7 (312 aa).

Residues 1-9 (MTYETDTTL) lie on the Extracellular side of the membrane. A helical membrane pass occupies residues 10 to 30 (MLVAVGEALVGILGNAFIALV). Residues 31 to 49 (NFMGWMKNRKIASIDLILS) are Cytoplasmic-facing. The helical transmembrane segment at 50–70 (SVAMSRICLQCIILLDCIILV) threads the bilayer. Topologically, residues 71 to 101 (QYPDTYNRGKEMRTVDFFWTLTNHLSVWFAT) are extracellular. Residues 102–122 (CLSIFYLFKIANFFHPLFLWI) form a helical membrane-spanning segment. The Cytoplasmic portion of the chain corresponds to 123–128 (KWRIDK). Residues 129–149 (LILRTLLACVIISLCFSLPVT) traverse the membrane as a helical segment. Over 150–187 (ENLSDDFRRCVKTKERINSTLRCKVNKAGHASVKVNLN) the chain is Extracellular. Residues Asn-151 and Asn-167 are each glycosylated (N-linked (GlcNAc...) asparagine). The helical transmembrane segment at 188 to 208 (LVMLFPFSVSLVSFLLLILSL) threads the bilayer. The Cytoplasmic portion of the chain corresponds to 209-235 (WRHTRQIQLSVTGYKDPSTTAHVKAMK). The chain crosses the membrane as a helical span at residues 236-256 (AVISFLALFVVYCLAFLIATS). Topologically, residues 257–266 (SYFMPESELA) are extracellular. A helical transmembrane segment spans residues 267–287 (VIWGELIALIYPSSHSFILIL). Residues 288–312 (GSSKLKQASVRVLCRVKTMLKGKKY) lie on the Cytoplasmic side of the membrane.

This sequence belongs to the G-protein coupled receptor T2R family. As to expression, expressed in subsets of taste receptor cells of the tongue and palate epithelium and exclusively in gustducin-positive cells. Expressed in 15% taste bud cells in circumvallate and foliate papillae but only in 2% in fungiform papillae. Expressed in gastric and duodenal tissues.

It localises to the membrane. Functionally, gustducin-coupled receptor implicated in the perception of bitter compounds in the oral cavity and the gastrointestinal tract. Signals through PLCB2 and the calcium-regulated cation channel TRPM5. The polypeptide is Taste receptor type 2 member 7 (Tas2r7) (Mus musculus (Mouse)).